Here is a 347-residue protein sequence, read N- to C-terminus: Merozoite surface protein P12 (347 aa).

The or 25 signal peptide spans 1 to 23; that stretch reads MIKLSKKYCLGISFVLYILLSVC. 2 consecutive 6-Cys domains span residues 27–172 and 175–305; these read KNLT…IPSL and KVKG…ISSS. N-linked (GlcNAc...) asparagine glycosylation is present at Asn-28. Disulfide bonds link Cys-31/Cys-53, Cys-67/Cys-138, and Cys-81/Cys-136. Asn-147, Asn-200, Asn-228, Asn-242, Asn-265, and Asn-322 each carry an N-linked (GlcNAc...) asparagine glycan. 3 disulfide bridges follow: Cys-179–Cys-211, Cys-225–Cys-286, and Cys-236–Cys-284. Asn-322 carries GPI-anchor amidated asparagine lipidation. Residues 323–347 constitute a propeptide, removed in mature form; that stretch reads SSFLTLSSYCAFITFIITSFLSFIL.

Heterodimer; heterodimerizes with PF41. May form an antiparallel heterodimer with PF41.

The protein localises to the cell surface. It is found in the cell membrane. This is Merozoite surface protein P12 (PF12) from Plasmodium falciparum.